A 306-amino-acid polypeptide reads, in one-letter code: Ornithine carbamoyltransferase (306 aa).

Carbamoyl phosphate is bound by residues 46-49, glutamine 73, arginine 97, and 124-127; these read STRT and HPTQ. Residues asparagine 156, aspartate 220, and 224-225 contribute to the L-ornithine site; that span reads SM. Residues 260–261 and arginine 288 each bind carbamoyl phosphate; that span reads CL.

This sequence belongs to the aspartate/ornithine carbamoyltransferase superfamily. OTCase family.

The protein resides in the cytoplasm. The enzyme catalyses carbamoyl phosphate + L-ornithine = L-citrulline + phosphate + H(+). It functions in the pathway amino-acid biosynthesis; L-arginine biosynthesis; L-arginine from L-ornithine and carbamoyl phosphate: step 1/3. In terms of biological role, reversibly catalyzes the transfer of the carbamoyl group from carbamoyl phosphate (CP) to the N(epsilon) atom of ornithine (ORN) to produce L-citrulline. The polypeptide is Ornithine carbamoyltransferase (Campylobacter jejuni (strain RM1221)).